The sequence spans 391 residues: S-adenosylmethionine synthase 1 (391 aa).

Glu-9 is a Mg(2+) binding site. His-15 contributes to the ATP binding site. A K(+)-binding site is contributed by Glu-43. Residues Glu-56 and Gln-99 each contribute to the L-methionine site. ATP is bound by residues 167–169, 235–238, Asp-246, 252–253, Ala-269, Lys-273, and Lys-277; these read DGK, SGRF, and RK. L-methionine is bound at residue Asp-246. Lys-277 lines the L-methionine pocket.

This sequence belongs to the AdoMet synthase family. In terms of assembly, homotetramer. Requires Mn(2+) as cofactor. Mg(2+) serves as cofactor. The cofactor is Co(2+). It depends on K(+) as a cofactor.

It is found in the cytoplasm. It carries out the reaction L-methionine + ATP + H2O = S-adenosyl-L-methionine + phosphate + diphosphate. The protein operates within amino-acid biosynthesis; S-adenosyl-L-methionine biosynthesis; S-adenosyl-L-methionine from L-methionine: step 1/1. In terms of biological role, catalyzes the formation of S-adenosylmethionine from methionine and ATP. The reaction comprises two steps that are both catalyzed by the same enzyme: formation of S-adenosylmethionine (AdoMet) and triphosphate, and subsequent hydrolysis of the triphosphate. The sequence is that of S-adenosylmethionine synthase 1 (METK1) from Vitis vinifera (Grape).